We begin with the raw amino-acid sequence, 737 residues long: Relaxin receptor 2 (737 aa).

Residues Met1–Asn399 are Extracellular-facing. Residues Leu27–Gly64 enclose the LDL-receptor class A domain. Cystine bridges form between Cys28-Cys41, Cys35-Cys54, and Cys48-Cys63. An N-linked (GlcNAc...) asparagine glycan is attached at Asn37. A glycan (N-linked (GlcNAc...) asparagine) is linked at Asn121. LRR repeat units follow at residues Asn121–Lys142, Gln145–Gly166, Asn169–Asp190, Gln193–Gly214, Ser217–Gln238, Gln241–Ser262, Ser265–Ser286, Asn289–Asp310, Leu313–Ser334, and Gln337–Pro358. The N-linked (GlcNAc...) asparagine glycan is linked to Asn257. The N-linked (GlcNAc...) asparagine glycan is linked to Asn318. Asn361 carries an N-linked (GlcNAc...) asparagine glycan. A helical transmembrane segment spans residues Ile400 to Ile420. The Cytoplasmic portion of the chain corresponds to Gly421 to Lys438. A helical transmembrane segment spans residues Ile439 to Ile459. Over Lys460–Cys478 the chain is Extracellular. Residues Cys478 and Cys556 are joined by a disulfide bond. A helical transmembrane segment spans residues Arg479 to Leu501. At Glu502 to Gln520 the chain is on the cytoplasmic side. Residues Thr521–Trp541 form a helical membrane-spanning segment. Residues Lys542–Gly575 lie on the Extracellular side of the membrane. The chain crosses the membrane as a helical span at residues Ile576–Phe596. The Cytoplasmic portion of the chain corresponds to Cys597 to Arg622. The chain crosses the membrane as a helical span at residues Phe623–Leu643. Over Ser644 to Thr653 the chain is Extracellular. Residues Ile654–Tyr674 form a helical membrane-spanning segment. Residues Thr675–Ser737 lie on the Cytoplasmic side of the membrane.

It belongs to the G-protein coupled receptor 1 family.

The protein resides in the cell membrane. Its function is as follows. Receptor for relaxin. The activity of this receptor is mediated by G proteins leading to stimulation of adenylate cyclase and an increase of cAMP. May also be a receptor for Leydig insulin-like peptide (INSL3). This chain is Relaxin receptor 2 (RXFP2), found in Canis lupus familiaris (Dog).